The sequence spans 265 residues: uncharacterized protein (265 aa).

Disordered stretches follow at residues 62–94 (RNKK…ALGK) and 118–149 (MVPG…RPNP). Residues 126–139 (DGPKKSDTDIKDAV) are compositionally biased toward basic and acidic residues.

This is an uncharacterized protein from Homo sapiens (Human).